The primary structure comprises 341 residues: Phosphate acyltransferase (341 aa).

This sequence belongs to the PlsX family. In terms of assembly, homodimer. Probably interacts with PlsY.

Its subcellular location is the cytoplasm. It carries out the reaction a fatty acyl-[ACP] + phosphate = an acyl phosphate + holo-[ACP]. It functions in the pathway lipid metabolism; phospholipid metabolism. Catalyzes the reversible formation of acyl-phosphate (acyl-PO(4)) from acyl-[acyl-carrier-protein] (acyl-ACP). This enzyme utilizes acyl-ACP as fatty acyl donor, but not acyl-CoA. The polypeptide is Phosphate acyltransferase (Elusimicrobium minutum (strain Pei191)).